A 113-amino-acid chain; its full sequence is U11-theraphotoxin-Hhn1a (113 aa).

The signal sequence occupies residues 1-21; sequence MNTVRVTFLLVFVLAVSLGQA. A propeptide spanning residues 22 to 74 is cleaved from the precursor; the sequence is DKDENRMEMQEKTEQGESYLDFAENLLLQKLEELEAKLLEEDSEESRNSRQKR. Cystine bridges form between Cys-75–Cys-90, Cys-82–Cys-95, and Cys-89–Cys-110.

The protein belongs to the neurotoxin 14 (magi-1) family. 01 (HNTX-16) subfamily. In terms of tissue distribution, expressed by the venom gland.

Its subcellular location is the secreted. Probable ion channel inhibitor. This chain is U11-theraphotoxin-Hhn1a, found in Cyriopagopus hainanus (Chinese bird spider).